A 256-amino-acid polypeptide reads, in one-letter code: tRNA-cytidine(32) 2-sulfurtransferase (256 aa).

Positions 35–40 (SGGKDS) match the PP-loop motif motif. Positions 110, 113, and 201 each coordinate [4Fe-4S] cluster.

It belongs to the TtcA family. Homodimer. Mg(2+) serves as cofactor. It depends on [4Fe-4S] cluster as a cofactor.

It is found in the cytoplasm. It catalyses the reaction cytidine(32) in tRNA + S-sulfanyl-L-cysteinyl-[cysteine desulfurase] + AH2 + ATP = 2-thiocytidine(32) in tRNA + L-cysteinyl-[cysteine desulfurase] + A + AMP + diphosphate + H(+). The protein operates within tRNA modification. Functionally, catalyzes the ATP-dependent 2-thiolation of cytidine in position 32 of tRNA, to form 2-thiocytidine (s(2)C32). The sulfur atoms are provided by the cysteine/cysteine desulfurase (IscS) system. The sequence is that of tRNA-cytidine(32) 2-sulfurtransferase from Coxiella burnetii (strain CbuG_Q212) (Coxiella burnetii (strain Q212)).